We begin with the raw amino-acid sequence, 75 residues long: Large ribosomal subunit protein bL31 (75 aa).

The protein belongs to the bacterial ribosomal protein bL31 family. Type A subfamily. Part of the 50S ribosomal subunit.

Binds the 23S rRNA. The protein is Large ribosomal subunit protein bL31 of Sphingopyxis alaskensis (strain DSM 13593 / LMG 18877 / RB2256) (Sphingomonas alaskensis).